Reading from the N-terminus, the 265-residue chain is (-)-isopiperitenol/(-)-carveol dehydrogenase, mitochondrial (265 aa).

A mitochondrion-targeting transit peptide spans 1–30 (MASVKKLAGKVAIVTGGASGIGEVTARLFA). Residue 13–38 (IVTGGASGIGEVTARLFAERGARAVV) coordinates NAD(+). S147 lines the substrate pocket. Y160 functions as the Proton acceptor in the catalytic mechanism.

Belongs to the short-chain dehydrogenases/reductases (SDR) family. As to quaternary structure, homodimer and homotetramer. Peltate glandular trichomes.

It is found in the mitochondrion. The enzyme catalyses (1S,6R)-isopiperitenol + NAD(+) = (6R)-isopiperitenone + NADH + H(+). It catalyses the reaction (1S,5R)-carveol + NADP(+) = (R)-carvone + NADPH + H(+). Involved in the biosynthesis of menthol and related monoterpenes in leaves. Can use (-)-trans-carveol and, with a lower relative velocity, (-)-trans-isopiperitenol, (+)-neomenthol, (+)-neoisomenthol and (-)-cis-isopiperitenol as substrates, but not (-)-cis-carvenol, (-)-menthol, (+)-isomenthol, 7-hydroxy-limonene, (-)-isopiperitenone or (-)-carvone. This is (-)-isopiperitenol/(-)-carveol dehydrogenase, mitochondrial from Mentha piperita (Peppermint).